A 703-amino-acid chain; its full sequence is Bifunctional arginine dihydrolase/ornithine cyclodeaminase AgrE (703 aa).

The arginine dihydrolase stretch occupies residues 10 to 269 (CPPDHYDVDY…GAAKCLTLRV (260 aa)). Positions 22, 65, 71, 90, and 139 each coordinate L-arginine. Asn22 contributes to the L-ornithine binding site. L-ornithine contacts are provided by Arg90, Arg139, and His168. The active-site Proton donor/acceptor is the His168. 2 residues coordinate L-arginine: Asp170 and Ala258. Cys264 lines the L-ornithine pocket. Cys264 (nucleophile) is an active-site residue. The interval 285 to 694 (SRIIRIEGHL…SLLTQQLDKL (410 aa)) is ornithine cyclodeaminase. Positions 524, 525, 603, 635, 636, 637, 638, 656, 679, and 680 each coordinate NAD(+).

This sequence in the N-terminal section; belongs to the DDAH family. The protein in the C-terminal section; belongs to the AgrE/ArgZ ornithine cyclodeaminase family. As to quaternary structure, homotetramer. NAD(+) serves as cofactor.

The catalysed reaction is L-arginine + 2 H2O + 2 H(+) = L-ornithine + 2 NH4(+) + CO2. It catalyses the reaction L-ornithine = L-proline + NH4(+). Its activity is regulated as follows. Ornithine cyclodeaminase activity is inhibited by ATP. Its function is as follows. Bifunctional enzyme involved in a cyanobacterial arginine utilization pathway that produces glutamate and enables cellular adaptation to nitrogen fluctuations. Catalyzes the hydrolysis of arginine to ornithine, with the release of ammonia and carbon dioxide. Then, catalyzes the conversion of ornithine to proline, with the release of ammonia. In Nostoc sp. (strain PCC 7120 / SAG 25.82 / UTEX 2576), this protein is Bifunctional arginine dihydrolase/ornithine cyclodeaminase AgrE.